The chain runs to 134 residues: MRSVLTISASLLFGLALSSVAHANDHKILGVIAMPRNETNDLTLKIPVCRIVKRIQLTADHGDIELSGASVYFKTARSASQSLNVPSSIKEGQTTGWININSDNDNKRCVSKITFSGHTVNSSDMARLKVIGDD.

The N-terminal stretch at 1 to 23 (MRSVLTISASLLFGLALSSVAHA) is a signal peptide.

It belongs to the UPF0412 family.

The polypeptide is UPF0412 protein YaaI (Salmonella choleraesuis (strain SC-B67)).